A 98-amino-acid polypeptide reads, in one-letter code: DNA-binding protein Fis (98 aa).

Positions 74–93 form a DNA-binding region, H-T-H motif; the sequence is QTRAALMMGINRGTLRKKLK.

This sequence belongs to the transcriptional regulatory Fis family. As to quaternary structure, homodimer.

Its function is as follows. Activates ribosomal RNA transcription. Plays a direct role in upstream activation of rRNA promoters. The chain is DNA-binding protein Fis from Citrobacter koseri (strain ATCC BAA-895 / CDC 4225-83 / SGSC4696).